We begin with the raw amino-acid sequence, 473 residues long: Ribulose bisphosphate carboxylase large chain (473 aa).

Residues 1 to 2 (MS) constitute a propeptide that is removed on maturation. Positions 123 and 173 each coordinate substrate. The Proton acceptor role is filled by Lys-175. Substrate is bound at residue Lys-177. Mg(2+)-binding residues include Lys-201, Asp-203, and Glu-204. An N6-carboxylysine modification is found at Lys-201. Ser-208 carries the phosphoserine modification. His-294 functions as the Proton acceptor in the catalytic mechanism. Substrate is bound by residues Arg-295 and His-327. Thr-330 carries the post-translational modification Phosphothreonine. Residue Ser-379 coordinates substrate.

Belongs to the RuBisCO large chain family. Type I subfamily. Heterohexadecamer of 8 large chains and 8 small chains; disulfide-linked. The disulfide link is formed within the large subunit homodimers. The cofactor is Mg(2+). The disulfide bond which can form in the large chain dimeric partners within the hexadecamer appears to be associated with oxidative stress and protein turnover.

It is found in the plastid. The protein localises to the chloroplast. It carries out the reaction 2 (2R)-3-phosphoglycerate + 2 H(+) = D-ribulose 1,5-bisphosphate + CO2 + H2O. The catalysed reaction is D-ribulose 1,5-bisphosphate + O2 = 2-phosphoglycolate + (2R)-3-phosphoglycerate + 2 H(+). Functionally, ruBisCO catalyzes two reactions: the carboxylation of D-ribulose 1,5-bisphosphate, the primary event in carbon dioxide fixation, as well as the oxidative fragmentation of the pentose substrate in the photorespiration process. Both reactions occur simultaneously and in competition at the same active site. The chain is Ribulose bisphosphate carboxylase large chain from Sinapis alba (White mustard).